The chain runs to 150 residues: 6,7-dimethyl-8-ribityllumazine synthase (150 aa).

Residues Phe-11, 43 to 45, and 67 to 69 contribute to the 5-amino-6-(D-ribitylamino)uracil site; these read VYD and AVI. (2S)-2-hydroxy-3-oxobutyl phosphate is bound at residue 72-73; sequence AT. His-75 serves as the catalytic Proton donor. Leu-100 serves as a coordination point for 5-amino-6-(D-ribitylamino)uracil. Residue Arg-115 coordinates (2S)-2-hydroxy-3-oxobutyl phosphate.

Belongs to the DMRL synthase family.

It carries out the reaction (2S)-2-hydroxy-3-oxobutyl phosphate + 5-amino-6-(D-ribitylamino)uracil = 6,7-dimethyl-8-(1-D-ribityl)lumazine + phosphate + 2 H2O + H(+). The protein operates within cofactor biosynthesis; riboflavin biosynthesis; riboflavin from 2-hydroxy-3-oxobutyl phosphate and 5-amino-6-(D-ribitylamino)uracil: step 1/2. Functionally, catalyzes the formation of 6,7-dimethyl-8-ribityllumazine by condensation of 5-amino-6-(D-ribitylamino)uracil with 3,4-dihydroxy-2-butanone 4-phosphate. This is the penultimate step in the biosynthesis of riboflavin. The chain is 6,7-dimethyl-8-ribityllumazine synthase from Pyrobaculum neutrophilum (strain DSM 2338 / JCM 9278 / NBRC 100436 / V24Sta) (Thermoproteus neutrophilus).